Consider the following 546-residue polypeptide: RuBisCO large subunit-binding protein subunit alpha, chloroplastic (546 aa).

The N-terminal 6 residues, 1-6, are a transit peptide targeting the chloroplast; sequence RFSVRA. S50 is modified (phosphoserine).

The protein belongs to the chaperonin (HSP60) family. In terms of assembly, oligomer of probably six alpha and six beta subunits.

It localises to the plastid. The protein localises to the chloroplast. In terms of biological role, this protein binds RuBisCO small and large subunits and is implicated in the assembly of the enzyme oligomer. The sequence is that of RuBisCO large subunit-binding protein subunit alpha, chloroplastic from Brassica napus (Rape).